Reading from the N-terminus, the 734-residue chain is Methionine--tRNA ligase (734 aa).

The 'HIGH' region signature appears at 12–22 (PYVNNIPHLGN). C143, C146, C155, and C158 together coordinate Zn(2+). The 'KMSKS' region motif lies at 330 to 334 (KFSKS). K333 contacts ATP. Residues 570–675 (FREKVLLRVV…QNPIAGERII (106 aa)) form the tRNA-binding domain.

This sequence belongs to the class-I aminoacyl-tRNA synthetase family. MetG type 1 subfamily. Homodimer. The cofactor is Zn(2+).

Its subcellular location is the cytoplasm. It catalyses the reaction tRNA(Met) + L-methionine + ATP = L-methionyl-tRNA(Met) + AMP + diphosphate. Is required not only for elongation of protein synthesis but also for the initiation of all mRNA translation through initiator tRNA(fMet) aminoacylation. The polypeptide is Methionine--tRNA ligase (Borreliella burgdorferi (strain ZS7) (Borrelia burgdorferi)).